The primary structure comprises 690 residues: Adhesion G protein-coupled receptor L4 (690 aa).

The first 19 residues, 1–19, serve as a signal peptide directing secretion; it reads MKRLPLLVVFSTLLNCSYT. Residues 20–57 enclose the EGF-like 1 domain; that stretch reads QNCTKTPCLPNAKCEIRNGIEACYCNMGFSGNGVTICE. Over 20–432 the chain is Extracellular; sequence QNCTKTPCLP…DYNILTRITQ (413 aa). The N-linked (GlcNAc...) asparagine glycan is linked to asparagine 21. Intrachain disulfides connect cysteine 22-cysteine 33, cysteine 27-cysteine 42, cysteine 44-cysteine 56, cysteine 62-cysteine 75, cysteine 69-cysteine 84, and cysteine 86-cysteine 107. The EGF-like 2; calcium-binding domain maps to 58–108; that stretch reads DDNECGNLTQSCGENANCTNTEGSYYCMCVPGFRSSSNQDRFITNDGTVCI. Asparagine 64 and asparagine 74 each carry an N-linked (GlcNAc...) asparagine glycan. N-linked (GlcNAc...) asparagine glycans are attached at residues asparagine 127, asparagine 177, asparagine 188, asparagine 249, asparagine 381, and asparagine 395. The 176-residue stretch at 244 to 419 folds into the GAIN-B domain; the sequence is TEFDTNSTDI…AILMSSGPSI (176 aa). Cystine bridges form between cysteine 370–cysteine 401 and cysteine 389–cysteine 403. The GPS stretch occupies residues 370–419; it reads CAFWNYSPDTMNGSWSSEGCELTYSNETHTSCRCNHLTHFAILMSSGPSI. A helical transmembrane segment spans residues 433–453; sequence LGIIISLICLAICIFTFWFFS. At 454–460 the chain is on the cytoplasmic side; that stretch reads EIQSTRT. Residues 461–481 traverse the membrane as a helical segment; it reads TIHKNLCCSLFLAELVFLVGI. Residues 482–499 lie on the Extracellular side of the membrane; sequence NTNTNKLFCSIIAGLLHY. A helical membrane pass occupies residues 500–520; it reads FFLAAFAWMCIEGIHLYLIVV. Residues 521–532 are Cytoplasmic-facing; the sequence is GVIYNKGFLHKN. Residues 533-553 form a helical membrane-spanning segment; sequence FYIFGYLSPAVVVGFSAALGY. Over 554–573 the chain is Extracellular; it reads RYYGTTKVCWLSTENNFIWS. The chain crosses the membrane as a helical span at residues 574–594; the sequence is FIGPACLIILVNLLAFGVIIY. The Cytoplasmic segment spans residues 595 to 618; the sequence is KVFRHTAGLKPEVSCFENIRSCAR. Residues 619 to 639 traverse the membrane as a helical segment; it reads GALALLFLLGTTWIFGVLHVV. Residues 640-646 are Extracellular-facing; the sequence is HASVVTA. A helical transmembrane segment spans residues 647-667; that stretch reads YLFTVSNAFQGMFIFLFLCVL. Topologically, residues 668–690 are cytoplasmic; the sequence is SRKIQEEYYRLFKNVPCCFGCLR.

It belongs to the G-protein coupled receptor 2 family. Adhesion G-protein coupled receptor (ADGR) subfamily. In terms of assembly, heterodimer of 2 chains generated by proteolytic processing; the large extracellular N-terminal fragment and the membrane-bound C-terminal fragment predominantly remain associated and non-covalently linked. In terms of processing, glycosylated. Proteolytically cleaved into 2 subunits, an extracellular alpha subunit and a seven-transmembrane subunit. Detected in the majority of epithelial cells in tumor and normal tissues. Expressed also in human umbilical vein endothelial cells.

The protein localises to the cell membrane. Functionally, endothelial orphan receptor that acts as a key regulator of angiogenesis. This Homo sapiens (Human) protein is Adhesion G protein-coupled receptor L4.